A 798-amino-acid polypeptide reads, in one-letter code: Iron-regulated transcriptional activator AFT2 (798 aa).

Disordered stretches follow at residues 142 to 274, 331 to 365, 449 to 545, 642 to 718, and 748 to 798; these read RSNK…KKLK, YPQP…QENN, NVDL…LPGS, QQQQ…NNIN, and QGNP…GPGW. The segment covering 153 to 165 has biased composition (polar residues); the sequence is EIANTPSVTSYSP. Low complexity predominate over residues 193 to 223; the sequence is STQSTRSSSSSDGSSIVSFGSLTSQSSSTSL. The segment covering 256-274 has biased composition (basic residues); sequence PVKRKNMKANTMKKSKKLK. A compositionally biased stretch (polar residues) spans 449 to 460; that stretch reads NVDLEQNGSNEN. Residues 476–517 are compositionally biased toward low complexity; that stretch reads ENQFSYQSQIQNQRQNQNQNQGQNQNQNQSQSQTPGQNSNQN. Polar residues-rich tracts occupy residues 518 to 543 and 646 to 656; these read DSQT…NWLP and PMFSMQNSGQQ. 2 stretches are compositionally biased toward low complexity: residues 657–695 and 705–718; these read LPPL…TLNP and NSTN…NNIN. Residues 748–773 are compositionally biased toward polar residues; the sequence is QGNPTNSNQSMVNSIMTTNSNKDGTA. Positions 774–789 are enriched in low complexity; it reads TSNNNSSGNTSNNLLN.

Its subcellular location is the nucleus. Functionally, transcription factor involved in iron metabolism, oxidative stress, surface adhesion, hyphal development and virulence. Functions as a negative regulator of MRS4 expression through the CACCC AFT-type sequence in a gene dose-dependent fashion. Acts as a repressor in flocculation, plastic adhesion, and surface hydrophobicity. This chain is Iron-regulated transcriptional activator AFT2 (AFT2), found in Candida albicans (strain SC5314 / ATCC MYA-2876) (Yeast).